Reading from the N-terminus, the 404-residue chain is XK-related protein 8 (404 aa).

8 helical membrane passes run 14-34 (FVFSVIGVFTFFVDWGADVWV), 44-64 (FFWFGVLVGLMVLSSVLVQMF), 167-187 (AVQFVSVAASTTSIAWMVVDY), 206-226 (SLIYFLWNLLLIAPRVAALAL), 227-247 (FASVVGGYLGLHLLLLWLVFV), 263-283 (GEWLYRATVGIIWYFSWFNVA), 292-312 (AIYHAFITADGAILLVTWWCC), and 319-339 (EPYALALLLTLLLSYLLGLLF).

Belongs to the XK family.

It localises to the cell membrane. The enzyme catalyses a 1,2-diacyl-sn-glycero-3-phospho-L-serine(in) = a 1,2-diacyl-sn-glycero-3-phospho-L-serine(out). Phospholipid scramblase that promotes phosphatidylserine exposure on apoptotic cell surface, possibly by mediating phospholipid scrambling. Phosphatidylserine is a specific marker only present at the surface of apoptotic cells and acts as a specific signal for engulfment. This Tetraodon nigroviridis (Spotted green pufferfish) protein is XK-related protein 8.